A 485-amino-acid chain; its full sequence is MKRLRPSDKFFELLGYKPHHVQLAIHRSTAKRRVACLGRQSGKSEAASVEAVFELFARPGSQGWIIAPTYDQAEIIFGRVVEKVERLAEVFPATEVQLQRRRLRLLVHHYDRPVNAPGAKRVATSEFRGKSADRPDNLRGATLDFVILDEAAMIPFSVWSEAIEPTLSVRDGWALIISTPKGLNWFYEFFLMGWRGGLKEGIPNSGVNQTHPDFESFHAASWDVWPERREWYMERRLYIPDLEFRQEYGAEFVSHSNSVFSGLDMLILLPYERRGTRLVVEDYRPDHIYCIGADFGKNQDYSVFSVLDLDTGAIVCLERMNGATWSDQVARLKALSEDYGHAYVVADTWGVGDAIAEELDAQGINYTPLPVKSSSVKEQLISNLALLMEKGQVAVPNDKTILDELRNFRYYRTASGNQVMRAYGRGHDDIVMSLALAYSQYEGKDGYKFELAEERPSKLKHEESVMSLVEDDFTDLELANRAFSA.

ADP is bound by residues 17 to 22 (KPHHVQ), 40 to 45 (QSGKSE), and Arg79. The interval 22 to 197 (QLAIHRSTAK…EFFLMGWRGG (176 aa)) is ATPase activity. ATP-binding residues include Gln97 and Gln99. The short motif at 125-131 (SEFRGKS) is the Walker A motif element. The Walker B motif motif lies at 145–150 (FVILDE). The active-site For ATPase activity is Glu150. The segment at 256–438 (SNSVFSGLDM…DIVMSLALAY (183 aa)) is nuclease. Asp294, Asp347, and Asp429 together coordinate Mg(2+).

The protein belongs to the Tequatrovirus large terminase family. Interacts with the terminase small subunit; the active complex is composed of a pentamer of terminase large subunits and a dodecamer of terminase small subunits. Interacts with the portal protein. Requires Mg(2+) as cofactor.

Its function is as follows. The terminase large subunit acts as an ATP driven molecular motor necessary for viral DNA translocation into empty capsids and as an endonuclease that cuts the viral genome to initiate and to end a packaging reaction The terminase lies at a unique vertex of the procapsid and is composed of two subunits, a small terminase subunit involved in viral DNA recognition (packaging sequence), and a large terminase subunit possessing endonucleolytic and ATPase activities. Both terminase subunits heterooligomerize and are docked on the portal protein to form the packaging machine. The terminase large subunit exhibits endonuclease activity and cleaves the viral genome concatemer. Once the capsid is packaged with the DNA, the terminase complex is substituted by the tail. The polypeptide is Terminase, large subunit (Thermus thermophilus (Thermus thermophilus phage P23-45)).